The following is a 332-amino-acid chain: tRNA U34 carboxymethyltransferase (332 aa).

Carboxy-S-adenosyl-L-methionine contacts are provided by residues lysine 96, tryptophan 110, lysine 115, glycine 135, 186–187 (LE), methionine 204, tyrosine 208, and arginine 323.

Belongs to the class I-like SAM-binding methyltransferase superfamily. CmoB family. In terms of assembly, homotetramer.

The catalysed reaction is carboxy-S-adenosyl-L-methionine + 5-hydroxyuridine(34) in tRNA = 5-carboxymethoxyuridine(34) in tRNA + S-adenosyl-L-homocysteine + H(+). Catalyzes carboxymethyl transfer from carboxy-S-adenosyl-L-methionine (Cx-SAM) to 5-hydroxyuridine (ho5U) to form 5-carboxymethoxyuridine (cmo5U) at position 34 in tRNAs. The chain is tRNA U34 carboxymethyltransferase from Hydrogenovibrio crunogenus (strain DSM 25203 / XCL-2) (Thiomicrospira crunogena).